An 853-amino-acid chain; its full sequence is Aryl hydrocarbon receptor (853 aa).

Positions 1-9 are excised as a propeptide; sequence MSSGANITY. Residues 1-38 form a disordered region; it reads MSSGANITYASRKRRKPVQKTVKPVPAEGIKSNPSKRH. 2 consecutive short sequence motifs (nuclear localization signal) follow at residues 12–15 and 36–41; these read RKRR and KRHRDR. One can recognise a bHLH domain in the interval 26-79; the sequence is PAEGIKSNPSKRHRDRLNTELDRLASLLPFPQDVINKLDKLSVLRLSVSYLRAK. The interval 37–65 is DNA-binding; sequence RHRDRLNTELDRLASLLPFPQDVINKLDK. 3 required for maintaining the overall integrity of the AHR:ARNT heterodimer and its transcriptional activity regions span residues 49-81, 116-124, and 264-266; these read LASL…AKSF, LLQALNGFV, and FAI. The Nuclear export signal signature appears at 63 to 71; the sequence is LDKLSVLRL. Positions 116–179 constitute a PAS 1 domain; sequence LLQALNGFVL…RQLHWALNPS (64 aa). The PAS 2 domain maps to 273–340; it reads PSILEIRTKN…CAESHIRMIK (68 aa). The region spanning 346–384 is the PAC domain; the sequence is MTVFRLLAKHSRWRWVQSNARLIYRNGRPDYIIATQRPL. The segment at 429-451 is disordered; that stretch reads TKSNTSRKDWAPQSTPSKDSFHP. Polar residues predominate over residues 440–451; that stretch reads PQSTPSKDSFHP.

Homodimer. Heterodimer; efficient DNA binding requires dimerization with another bHLH protein. Interacts with ARNT; the heterodimer ARNT:AHR binds to core DNA sequence 5'-TGCGTG-3' within the dioxin response element (DRE) of target gene promoters and activates their transcription. Binds MYBBP1A. Interacts with coactivators including SRC-1, RIP140 and NOCA7, and with the corepressor SMRT. Interacts with NEDD8 and IVNS1ABP. Interacts with BMAL1. Interacts with HSP90AB1. Interacts with TIPARP; leading to mono-ADP-ribosylation of AHR and subsequent inhibition of AHR. Mono-ADP-ribosylated, leading to inhibit transcription activator activity of AHR. As to expression, expressed in all tissues tested including brain, heart, kidney, liver, lung, spleen, skeletal muscle and thymus.

The protein localises to the cytoplasm. Its subcellular location is the nucleus. Its function is as follows. Ligand-activated transcription factor that enables cells to adapt to changing conditions by sensing compounds from the environment, diet, microbiome and cellular metabolism, and which plays important roles in development, immunity and cancer. Upon ligand binding, translocates into the nucleus, where it heterodimerizes with ARNT and induces transcription by binding to xenobiotic response elements (XRE). Regulates a variety of biological processes, including angiogenesis, hematopoiesis, drug and lipid metabolism, cell motility and immune modulation. Xenobiotics can act as ligands: upon xenobiotic-binding, activates the expression of multiple phase I and II xenobiotic chemical metabolizing enzyme genes (such as the CYP1A1 gene). Mediates biochemical and toxic effects of halogenated aromatic hydrocarbons. Next to xenobiotics, natural ligands derived from plants, microbiota, and endogenous metabolism are potent AHR agonists. Tryptophan (Trp) derivatives constitute an important class of endogenous AHR ligands. Acts as a negative regulator of anti-tumor immunity: indoles and kynurenic acid generated by Trp catabolism act as ligand and activate AHR, thereby promoting AHR-driven cancer cell motility and suppressing adaptive immunity. Regulates the circadian clock by inhibiting the basal and circadian expression of the core circadian component PER1. Inhibits PER1 by repressing the CLOCK-BMAL1 heterodimer mediated transcriptional activation of PER1. The heterodimer ARNT:AHR binds to core DNA sequence 5'-TGCGTG-3' within the dioxin response element (DRE) of target gene promoters and activates their transcription. The protein is Aryl hydrocarbon receptor (Ahr) of Rattus norvegicus (Rat).